Here is a 504-residue protein sequence, read N- to C-terminus: ATP synthase subunit alpha (504 aa).

171-178 is an ATP binding site; it reads GDRATGKT.

This sequence belongs to the ATPase alpha/beta chains family. F-type ATPases have 2 components, CF(1) - the catalytic core - and CF(0) - the membrane proton channel. CF(1) has five subunits: alpha(3), beta(3), gamma(1), delta(1), epsilon(1). CF(0) has three main subunits: a(1), b(2) and c(9-12). The alpha and beta chains form an alternating ring which encloses part of the gamma chain. CF(1) is attached to CF(0) by a central stalk formed by the gamma and epsilon chains, while a peripheral stalk is formed by the delta and b chains.

Its subcellular location is the cell inner membrane. It carries out the reaction ATP + H2O + 4 H(+)(in) = ADP + phosphate + 5 H(+)(out). Its function is as follows. Produces ATP from ADP in the presence of a proton gradient across the membrane. The alpha chain is a regulatory subunit. This chain is ATP synthase subunit alpha, found in Sulfurihydrogenibium sp. (strain YO3AOP1).